The primary structure comprises 330 residues: D-lactate dehydrogenase (330 aa).

Residues 156-157 (RI), aspartate 176, 206-207 (VP), 233-235 (AAR), and aspartate 259 contribute to the NAD(+) site. Residue arginine 235 is part of the active site. Residue glutamate 264 is part of the active site. Residue histidine 296 is the Proton donor of the active site.

Belongs to the D-isomer specific 2-hydroxyacid dehydrogenase family.

The catalysed reaction is (R)-lactate + NAD(+) = pyruvate + NADH + H(+). In Staphylococcus epidermidis (strain ATCC 35984 / DSM 28319 / BCRC 17069 / CCUG 31568 / BM 3577 / RP62A), this protein is D-lactate dehydrogenase (ldhD).